The following is a 158-amino-acid chain: Cyclic pyranopterin monophosphate synthase (158 aa).

Substrate is bound by residues Met76–His78 and Met114–Glu115. Asp129 is a catalytic residue.

This sequence belongs to the MoaC family. As to quaternary structure, homohexamer; trimer of dimers.

The catalysed reaction is (8S)-3',8-cyclo-7,8-dihydroguanosine 5'-triphosphate = cyclic pyranopterin phosphate + diphosphate. It functions in the pathway cofactor biosynthesis; molybdopterin biosynthesis. Its function is as follows. Catalyzes the conversion of (8S)-3',8-cyclo-7,8-dihydroguanosine 5'-triphosphate to cyclic pyranopterin monophosphate (cPMP). The sequence is that of Cyclic pyranopterin monophosphate synthase from Clostridium perfringens (strain SM101 / Type A).